Here is a 1167-residue protein sequence, read N- to C-terminus: Outer membrane protein SlpA (1167 aa).

An N-terminal signal peptide occupies residues 1 to 22 (MKKSLIALTTALSFGLAAAQTA). Topologically, residues 23–254 (APVSAPQVPA…RIAALERNAF (232 aa)) are periplasmic. Residues 29–92 (QVPALTDVPA…DQMRDGETPA (64 aa)) enclose the SLH domain. The chain crosses the membrane as a beta stranded span at residues 255–268 (SVKPSLTIGYSVSR). Topologically, residues 269 to 377 (TSRNFDVDRL…RNGFGFNNLA (109 aa)) are extracellular. Positions 274, 276, 305, 308, 310, and 381 each coordinate Cu(2+). The chain crosses the membrane as a beta stranded span at residues 378–403 (RYKEGSTDIGISLGFDTSGQFSQVTS). The Periplasmic portion of the chain corresponds to 404-416 (GTGGSLFSTAGRL). Residues 417–428 (QVNQIDLNFGLV) form a beta stranded membrane-spanning segment. Topologically, residues 429–471 (TGLPSDAYVDTNGNGKKDDGEATGRGTYLGSGGTAAILRDPAG) are extracellular. Residues D438, N442, K444, D446, and E449 each contribute to the Fe(3+) site. A beta stranded transmembrane segment spans residues 472-490 (NVYRPVFFRFKNATTQFSV). The Periplasmic portion of the chain corresponds to 491-494 (GNNP). The beta stranded transmembrane segment at 495–500 (VIVTLG) threads the bilayer. Residues 501–519 (QQQKFYFSDYVFDNNYDGR) lie on the Extracellular side of the membrane. 2 residues coordinate Cu(2+): D513 and N515. The beta stranded transmembrane segment at 520–528 (GDGFTVTVD) threads the bilayer. Topologically, residues 529 to 540 (GSNVPVIGAWKP) are periplasmic. The beta stranded transmembrane segment at 541–549 (QIKGVYGSR) threads the bilayer. Cu(2+) is bound by residues R549, G551, D553, and G559. Residues 550–561 (SGLDGTAEAGYG) lie on the Extracellular side of the membrane. Residues 562 to 571 (VYYRGVRAQI) traverse the membrane as a beta stranded segment. Over 572 to 577 (TPVGTL) the chain is Periplasmic. Residues 578–588 (TAGIHYAQEGR) form a beta stranded membrane-spanning segment. The Extracellular portion of the chain corresponds to 589-601 (DMFGAAQNTTSTP). Residues 602–615 (SDVTTYGADLHGKA) traverse the membrane as a beta stranded segment. The Periplasmic segment spans residues 616–617 (FG). The beta stranded transmembrane segment at 618–630 (VELHSEYATSRVR) threads the bilayer. Residue S622 coordinates deinoxanthin. Residues 631–638 (PNTANAAV) lie on the Extracellular side of the membrane. Residues 639–649 (QTSNAFYARVA) form a beta stranded membrane-spanning segment. The Periplasmic portion of the chain corresponds to 650–670 (TRKDNLAFDLNTPAAKFGNDT). The beta stranded transmembrane segment at 671-682 (FGVSLYDLNYRK) threads the bilayer. At 683 to 753 (IDAGYNNVAG…GTVVATNTKI (71 aa)) the chain is on the extracellular side. G716 contacts Cu(2+). A beta stranded transmembrane segment spans residues 754 to 766 (GQMGFGVKAAANL). Residues 767–768 (GP) are Periplasmic-facing. Residues 769-779 (VAIGGYYDTST) traverse the membrane as a beta stranded segment. Residues 780 to 788 (GANGDNANR) are Extracellular-facing. The chain crosses the membrane as a beta stranded span at residues 789 to 798 (MTEAGGSAKV). Residues 799 to 802 (AYSI) are Periplasmic-facing. The beta stranded transmembrane segment at 803–814 (FSLRGTYNTLDS) threads the bilayer. Over 815–831 (NRPQIYRDAAGTQIIGD) the chain is Extracellular. The beta stranded transmembrane segment at 832–843 (AKVRRYAVQADV) threads the bilayer. Topologically, residues 844 to 848 (TPGLG) are periplasmic. A beta stranded membrane pass occupies residues 849 to 860 (LFVGAYYRDVNV). The Extracellular segment spans residues 861–931 (NGVRSTTDRG…DQSRTATCFT (71 aa)). Residues 932-940 (SYGVEAGHA) form a beta stranded membrane-spanning segment. At 941-949 (GDNANALVK) the chain is on the periplasmic side. Residues 950-960 (DLFFRVGYSRV) traverse the membrane as a beta stranded segment. Residues 961–976 (YVPTTATATTGDFSGS) are Extracellular-facing. The beta stranded transmembrane segment at 977–988 (VTYGDARYDRKV) threads the bilayer. Topologically, residues 989–990 (GV) are periplasmic. A beta stranded transmembrane segment spans residues 991–1002 (ANVRLAGSFSTT). At 1003 to 1014 (NTQLDSRPAGTR) the chain is on the extracellular side. A beta stranded transmembrane segment spans residues 1015-1023 (GAVGLIVRT). Residues 1024–1032 (DPLENVPFR) lie on the Periplasmic side of the membrane. A beta stranded transmembrane segment spans residues 1033 to 1046 (PQFNGQVGYYTADN). Residues 1047–1052 (RVAAGN) are Extracellular-facing. A beta stranded transmembrane segment spans residues 1053 to 1066 (YNANATKYGAGVVL). Topologically, residues 1067 to 1073 (NDFLLPQ) are periplasmic. Residues 1074–1086 (TKIGVRYDGYMAQ) form a beta stranded membrane-spanning segment. Over 1087–1108 (NRQYTPFDGDGTQGYFSDANNN) the chain is Extracellular. Residues 1109–1122 (RRTNLNGVYVEGAY) traverse the membrane as a beta stranded segment. At 1123–1124 (QD) the chain is on the periplasmic side. A beta stranded transmembrane segment spans residues 1125–1138 (LIFSYGTYTLSQKD). Residues 1139–1153 (LNGVEYGSGINNGQP) are Extracellular-facing. Residues 1154-1166 (ARGQTFKISYKVN) traverse the membrane as a beta stranded segment. Position 1167 (F1167) is a topological domain, periplasmic.

In terms of assembly, homotrimer. Part of a heterooligomeric complex resulting in the main assembly named S-layer deinoxanthin-binding complex (SDBC) which is composed of six different subunits, namely SlpA, DR_2310, DR_0505, DR_A0283, DR_A0282, and DR_A0281.

Its subcellular location is the cell envelope. It localises to the cell outer membrane. The catalysed reaction is L-arginine(in) = L-arginine(out). It catalyses the reaction L-lysine(in) = L-lysine(out). The enzyme catalyses L-glutamate(out) = L-glutamate(in). Plays an important role in the structural organization and integrity of the cell envelope, bridging the outer membrane to the peptidoglyan layer. Is a highly abundant molecule in the D.radiodurans cell envelope but is not a fundamental component of the S-layer. Binds the carotenoid deinoxanthin, a strong protective antioxidant specific of this bacterium, and could be part of the first lane of defense against UV radiation, especially under desiccation. Appears to be a nonselective channel. Is able to transport charged amino acids such as Lys, Arg and Glu; the large dimension of the pore points toward the physiological importance of the SDBC complex in assisting and allowing the exchange of substances, including nutrients, with the surrounding environment. The protein is Outer membrane protein SlpA of Deinococcus radiodurans (strain ATCC 13939 / DSM 20539 / JCM 16871 / CCUG 27074 / LMG 4051 / NBRC 15346 / NCIMB 9279 / VKM B-1422 / R1).